We begin with the raw amino-acid sequence, 528 residues long: Tubulin-specific chaperone E (528 aa).

One can recognise a CAP-Gly domain in the interval 27–71 (GLVPPVAGLWLGVEWDNPERGKHDGSHEGTVYFKCRHPTAGSFIR). 7 LRR repeats span residues 152 to 176 (CPNI…DIAD), 178 to 206 (LKHL…TFPT), 207 to 229 (LKVL…ASGW), 231 to 253 (VLEK…DVLQ), 254 to 274 (TVKL…LFLI), 279 to 300 (RLEQ…DAGI), and 309 to 330 (SLQY…NELD). The 43-residue stretch at 343 to 385 (NPLTEGSKDAQTTRQFIIARIGQLRTLNKCAIEPEERRGAELD) folds into the LRRCT domain. K464 bears the N6-acetyllysine mark. S496 is modified (phosphoserine).

This sequence belongs to the TBCE family. Supercomplex made of cofactors A to E. Cofactors A and D function by capturing and stabilizing tubulin in a quasi-native conformation. Cofactor E binds to the cofactor D-tubulin complex; interaction with cofactor C then causes the release of tubulin polypeptides that are committed to the native state. Cofactors B and E can form a heterodimer which binds to alpha-tubulin and enhances their ability to dissociate tubulin heterodimers. Interacts with TBCD.

The protein resides in the cytoplasm. It is found in the cytoskeleton. Tubulin-folding protein; involved in the second step of the tubulin folding pathway and in the regulation of tubulin heterodimer dissociation. Required for correct organization of microtubule cytoskeleton and mitotic splindle, and maintenance of the neuronal microtubule network. The polypeptide is Tubulin-specific chaperone E (TBCE) (Bos taurus (Bovine)).